Reading from the N-terminus, the 494-residue chain is UDP-N-acetylmuramoyl-L-alanyl-D-glutamate--L-lysine ligase (494 aa).

Serine 30 serves as a coordination point for UDP-N-acetyl-alpha-D-muramoyl-L-alanyl-D-glutamate. 110–116 (GTNGKTS) contacts ATP. Residues 152-153 (TT), serine 179, and arginine 187 each bind UDP-N-acetyl-alpha-D-muramoyl-L-alanyl-D-glutamate. Lysine 219 carries the N6-carboxylysine modification. The L-lysine recognition motif signature appears at 406-409 (DNPA).

It belongs to the MurCDEF family. MurE subfamily. In terms of processing, carboxylation is probably crucial for Mg(2+) binding and, consequently, for the gamma-phosphate positioning of ATP.

It localises to the cytoplasm. The catalysed reaction is UDP-N-acetyl-alpha-D-muramoyl-L-alanyl-D-glutamate + L-lysine + ATP = UDP-N-acetyl-alpha-D-muramoyl-L-alanyl-gamma-D-glutamyl-L-lysine + ADP + phosphate + H(+). It functions in the pathway cell wall biogenesis; peptidoglycan biosynthesis. In terms of biological role, catalyzes the addition of L-lysine to the nucleotide precursor UDP-N-acetylmuramoyl-L-alanyl-D-glutamate (UMAG) in the biosynthesis of bacterial cell-wall peptidoglycan. In Staphylococcus haemolyticus (strain JCSC1435), this protein is UDP-N-acetylmuramoyl-L-alanyl-D-glutamate--L-lysine ligase.